The following is a 124-amino-acid chain: Fluoride-specific ion channel FluC 1 (124 aa).

Transmembrane regions (helical) follow at residues 7–27 (IQSK…LGAI), 32–52 (LNNY…IVGL), 58–78 (IQFF…GWIL), and 93–113 (AGLI…TFWI). Residues Gly68 and Thr71 each coordinate Na(+).

The protein belongs to the fluoride channel Fluc/FEX (TC 1.A.43) family.

The protein resides in the cell inner membrane. It catalyses the reaction fluoride(in) = fluoride(out). Its activity is regulated as follows. Na(+) is not transported, but it plays an essential structural role and its presence is essential for fluoride channel function. In terms of biological role, fluoride-specific ion channel. Important for reducing fluoride concentration in the cell, thus reducing its toxicity. In Prochlorococcus marinus (strain SARG / CCMP1375 / SS120), this protein is Fluoride-specific ion channel FluC 1.